A 54-amino-acid polypeptide reads, in one-letter code: uncharacterized protein (54 aa).

The N-terminal stretch at 1-23 (MKELIFFLLIIVILFVVFMVVSS) is a signal peptide.

This is an uncharacterized protein from Acheta domesticus (House cricket).